The following is a 407-amino-acid chain: Tryptophan synthase beta chain (407 aa).

N6-(pyridoxal phosphate)lysine is present on Lys91.

Belongs to the TrpB family. As to quaternary structure, tetramer of two alpha and two beta chains. Requires pyridoxal 5'-phosphate as cofactor.

It carries out the reaction (1S,2R)-1-C-(indol-3-yl)glycerol 3-phosphate + L-serine = D-glyceraldehyde 3-phosphate + L-tryptophan + H2O. It functions in the pathway amino-acid biosynthesis; L-tryptophan biosynthesis; L-tryptophan from chorismate: step 5/5. Functionally, the beta subunit is responsible for the synthesis of L-tryptophan from indole and L-serine. In Streptococcus pneumoniae (strain 70585), this protein is Tryptophan synthase beta chain.